The following is a 100-amino-acid chain: Large ribosomal subunit protein uL23 (100 aa).

The protein belongs to the universal ribosomal protein uL23 family. As to quaternary structure, part of the 50S ribosomal subunit. Contacts protein L29, and trigger factor when it is bound to the ribosome.

One of the early assembly proteins it binds 23S rRNA. One of the proteins that surrounds the polypeptide exit tunnel on the outside of the ribosome. Forms the main docking site for trigger factor binding to the ribosome. This is Large ribosomal subunit protein uL23 from Parasynechococcus marenigrum (strain WH8102).